Consider the following 271-residue polypeptide: Calretinin (271 aa).

EF-hand domains lie at 16-51 (LTAS…LEKA), 63-98 (NFGE…EENF), 107-142 (GSSA…LLKK), 151-186 (KLQE…QENF), 195-230 (LTSE…LYEK), and 235-270 (MNIQ…SEPP). Ca(2+)-binding residues include Asp-29, Asp-31, Asn-33, Tyr-35, Glu-40, Asp-76, Asn-78, Asp-80, Lys-82, Glu-87, Asp-120, Asp-122, Ser-124, Tyr-126, Glu-131, Asp-164, Asn-166, Asp-168, Lys-170, Glu-175, Asp-208, Asp-210, Ser-212, Tyr-214, and Glu-219. The residue at position 214 (Tyr-214) is a Phosphotyrosine.

The protein belongs to the calbindin family.

The protein resides in the synapse. It is found in the cell projection. It localises to the dendrite. Functionally, calcium-binding protein involved in calcium homeostasis and signal transduction. It plays a critical role in buffering intracellular calcium levels and modulating calcium-dependent signaling pathways. Predominantly expressed in specific neuronal populations, influences synaptic plasticity and neuronal excitability, contributing to learning and memory. During embryonic development, it facilitates neuronal differentiation and maturation. The polypeptide is Calretinin (Calb2) (Rattus norvegicus (Rat)).